We begin with the raw amino-acid sequence, 271 residues long: Ribosomal RNA small subunit methyltransferase A (271 aa).

Residues Asn22, Leu24, Gly49, Glu70, Asp96, and Asn116 each contribute to the S-adenosyl-L-methionine site.

The protein belongs to the class I-like SAM-binding methyltransferase superfamily. rRNA adenine N(6)-methyltransferase family. RsmA subfamily.

The protein resides in the cytoplasm. It catalyses the reaction adenosine(1518)/adenosine(1519) in 16S rRNA + 4 S-adenosyl-L-methionine = N(6)-dimethyladenosine(1518)/N(6)-dimethyladenosine(1519) in 16S rRNA + 4 S-adenosyl-L-homocysteine + 4 H(+). Its function is as follows. Specifically dimethylates two adjacent adenosines (A1518 and A1519) in the loop of a conserved hairpin near the 3'-end of 16S rRNA in the 30S particle. May play a critical role in biogenesis of 30S subunits. This chain is Ribosomal RNA small subunit methyltransferase A, found in Sphingopyxis alaskensis (strain DSM 13593 / LMG 18877 / RB2256) (Sphingomonas alaskensis).